The chain runs to 486 residues: Ribulose bisphosphate carboxylase large chain 3 (486 aa).

Residues asparagine 125 and threonine 175 each coordinate substrate. The active-site Proton acceptor is lysine 177. Lysine 179 is a binding site for substrate. Mg(2+) is bound by residues lysine 203, aspartate 205, and glutamate 206. An N6-carboxylysine modification is found at lysine 203. The Proton acceptor role is filled by histidine 295. Substrate-binding residues include arginine 296, histidine 328, and serine 380.

It belongs to the RuBisCO large chain family. Type I subfamily. As to quaternary structure, heterohexadecamer of 8 large chains and 8 small chains. Mg(2+) serves as cofactor.

It carries out the reaction 2 (2R)-3-phosphoglycerate + 2 H(+) = D-ribulose 1,5-bisphosphate + CO2 + H2O. It catalyses the reaction D-ribulose 1,5-bisphosphate + O2 = 2-phosphoglycolate + (2R)-3-phosphoglycerate + 2 H(+). In terms of biological role, ruBisCO catalyzes two reactions: the carboxylation of D-ribulose 1,5-bisphosphate, the primary event in carbon dioxide fixation, as well as the oxidative fragmentation of the pentose substrate. Both reactions occur simultaneously and in competition at the same active site. In Bradyrhizobium sp. (strain BTAi1 / ATCC BAA-1182), this protein is Ribulose bisphosphate carboxylase large chain 3.